We begin with the raw amino-acid sequence, 120 residues long: Large ribosomal subunit protein bL20 (120 aa).

The protein belongs to the bacterial ribosomal protein bL20 family.

Binds directly to 23S ribosomal RNA and is necessary for the in vitro assembly process of the 50S ribosomal subunit. It is not involved in the protein synthesizing functions of that subunit. This is Large ribosomal subunit protein bL20 from Novosphingobium aromaticivorans (strain ATCC 700278 / DSM 12444 / CCUG 56034 / CIP 105152 / NBRC 16084 / F199).